A 249-amino-acid chain; its full sequence is Diaminopimelate epimerase (249 aa).

Substrate contacts are provided by Asn11 and Asn60. The Proton donor role is filled by Cys69. Substrate-binding positions include 70–71, Asn164, and 182–183; these read GN and ER. Cys192 serves as the catalytic Proton acceptor. 193 to 194 contacts substrate; it reads GT.

The protein belongs to the diaminopimelate epimerase family. In terms of assembly, homodimer.

Its subcellular location is the cytoplasm. The catalysed reaction is (2S,6S)-2,6-diaminopimelate = meso-2,6-diaminopimelate. The protein operates within amino-acid biosynthesis; L-lysine biosynthesis via DAP pathway; DL-2,6-diaminopimelate from LL-2,6-diaminopimelate: step 1/1. Catalyzes the stereoinversion of LL-2,6-diaminopimelate (L,L-DAP) to meso-diaminopimelate (meso-DAP), a precursor of L-lysine and an essential component of the bacterial peptidoglycan. This Campylobacter jejuni subsp. jejuni serotype O:6 (strain 81116 / NCTC 11828) protein is Diaminopimelate epimerase.